The primary structure comprises 385 residues: MEWNGLKMIISTMEPQVSNGPTSNTSNGPSSNNRNCPSPMQTGAATDDSKTNLIVNYLPQNMTQEEFRSLFGSIGEIESCKLVRDKITGQSLGYGFVNYIDPKDAEKAINTLNGLRLQTKTIKVSYARPSSASIRDANLYVSGLPKTMTQKELEQLFSQYGRIITSRILVDQVTGVSRGVGFIRFDKRIEAEEAIKGLNGQKPSGATEPITVKFANNPSQKSSQALLSQLYQSPNRRYPGPLHHQAQRFRLDNLLNMAYGVKRLMSGPVPPSACPPRFSPITIDGMTSLVGMNIPGHTGTGWCIFVYNLSPDSDESVLWQLFGPFGAVNNVKVIRDFNTNKCKGFGFVTMTNYDEAAMAIASLNGYRLGDRVLQVSFKTNKAHKS.

Positions threonine 12–aspartate 48 are disordered. The segment covering serine 18 to asparagine 33 has biased composition (low complexity). The segment covering arginine 34–alanine 44 has biased composition (polar residues). The residue at position 38 (serine 38) is a Phosphoserine. 2 consecutive RRM domains span residues threonine 51–proline 129 and alanine 137–asparagine 217. Serine 233 carries the post-translational modification Phosphoserine. At arginine 248 the chain carries Asymmetric dimethylarginine; by CARM1; alternate. Arginine 248 is subject to Omega-N-methylarginine; by CARM1; alternate. The region spanning tryptophan 302–asparagine 380 is the RRM 3 domain.

This sequence belongs to the RRM elav family. Component of a TAU mRNP complex, at least composed of IGF2BP1, ELAVL4 and G3BP. Associates with the EIF4F cap-binding complex, composed of EIF4G, EIF4A, EIF4E and PABP. Within the EIF4F cap-binding complex, interacts with EIF4A. Interacts with SMN (via Tudor domain) in an RNA-independent manner; the interaction is required for localization of ELAVL4 to RNA granules. Interacts with MAP1 light chain LC1 (via C-terminus); the interaction contributes to the association of ELAVL4 with microtubules. Interacts with MAP1 light chain LC2. Post-translationally, methylated by CARM1, which leads to reduced RNA-binding activity and enhanced interaction with SMN. Methylation at Arg-248 by CARM1 weakens protective binding to the 3'UTR of CDKN1A mRNA and down-regulates CDKN1A protein expression, thereby maintaining cells in a proliferative state. Methylation is inhibited by NGF, which facilitates neurite outgrowth. In terms of tissue distribution, expressed in the brain, including the hippocampus, and in pancreatic beta cells (at protein level). Expressed in pyramidal neurons of the hippocampal CA3 and CA1 region and in the hilus but not in dentate granule cells (at protein level). Expressed in the dorsal root ganglion and the spinal cord (at protein level). Expressed in neural stem and progenitor cells (at protein level). Expressed in radial glia-like cells and in transient amplifying cells in the subventricular zone (SVZ), and in immature neurons both in the SVZ and the rostral migratory stream as well as in mature neurons in the olfactory bulb (at protein level). Expressed in testis and in the brain, including the hippocampus, the neocortex and the cerebellum. Expressed in lower- but not upper-layer primary neurons of the mature neocortex, in the hippocampal regions CA1-3 and the dentate gyrus. Expressed in the mitral and granule cells of the olfactory bulb, cerebral cortex, entorhinal cortex, thalamus, medial habenula, amygdala, granule cells of the cerebellum, pons, olivary nucleus, dorsal and ventral spinal cord and in dorsal root ganglia. Expressed in motor neurons. Isoform 4: Expressed in the brain. Isoform 5: Expressed in the brain. Isoform 6: Expressed in the brain. Isoform 7: Expressed in the brain. Isoform 8: Expressed in the brain. Isoform 9: Expressed in the brain. Isoform 10: Expressed in the brain. Isoform 11: Expressed in the brain.

The protein resides in the cytoplasm. Its subcellular location is the perikaryon. The protein localises to the cell projection. It localises to the dendrite. It is found in the axon. The protein resides in the growth cone. In terms of biological role, RNA-binding protein that is involved in the post-transcriptional regulation of mRNAs. Plays a role in the regulation of mRNA stability, alternative splicing and translation. Binds to AU-rich element (ARE) sequences in the 3' untranslated region (3'UTR) of target mRNAs, including GAP43, VEGF, FOS, CDKN1A and ACHE mRNA. Many of the target mRNAs are coding for RNA-binding proteins, transcription factors and proteins involved in RNA processing and/or neuronal development and function. By binding to the mRNA 3'UTR, decreases mRNA deadenylation and thereby contributes to the stabilization of mRNA molecules and their protection from decay. Also binds to the polyadenylated (poly(A)) tail in the 3'UTR of mRNA, thereby increasing its affinity for mRNA binding. Mainly plays a role in neuron-specific RNA processing by stabilization of mRNAs such as GAP43, ACHE and mRNAs of other neuronal proteins, thereby contributing to the differentiation of neural progenitor cells, nervous system development, learning and memory mechanisms. Involved in the negative regulation of the proliferative activity of neuronal stem cells and in the positive regulation of neuronal differentiation of neural progenitor cells. Promotes neuronal differentiation of neural stem/progenitor cells in the adult subventricular zone of the hippocampus by binding to and stabilizing SATB1 mRNA. Binds and stabilizes MSI1 mRNA in neural stem cells. Exhibits increased binding to ACHE mRNA during neuronal differentiation, thereby stabilizing ACHE mRNA and enhancing its expression. Protects CDKN1A mRNA from decay by binding to its 3'-UTR. May bind to APP and BACE1 mRNAS and the BACE1AS lncRNA and enhance their stabilization. Plays a role in neurite outgrowth and in the establishment and maturation of dendritic arbors, thereby contributing to neocortical and hippocampal circuitry function. Stabilizes GAP43 mRNA and protects it from decay during postembryonic development in the brain. By promoting the stabilization of GAP43 mRNA, plays a role in NGF-mediated neurite outgrowth. Binds to BDNF long 3'UTR mRNA, thereby leading to its stabilization and increased dendritic translation after activation of PKC. By increasing translation of BDNF after nerve injury, may contribute to nerve regeneration. Acts as a stabilizing factor by binding to the 3'UTR of NOVA1 mRNA, thereby increasing its translation and enhancing its functional activity in neuron-specific splicing. Stimulates translation of mRNA in a poly(A)- and cap-dependent manner, possibly by associating with the EIF4F cap-binding complex. May also negatively regulate translation by binding to the 5'UTR of Ins2 mRNA, thereby repressing its translation. Upon glucose stimulation, Ins2 mRNA is released from ELAVL4 and translational inhibition is abolished. Also plays a role in the regulation of alternative splicing. May regulate alternative splicing of CALCA pre-mRNA into Calcitonin and Calcitonin gene-related peptide 1 (CGRP) by competing with splicing regulator TIAR for binding to U-rich sequences of CALCA pre-mRNA. The chain is ELAV-like protein 4 (Elavl4) from Mus musculus (Mouse).